We begin with the raw amino-acid sequence, 104 residues long: MAFRPLHDRILVRRVESEEKTKGGIIIPDTAKEKPQEGEVLAVGPGARGEQGQIQPLDVKVGDRILFGKWSGTEIKIDGEDLLIMKESDVMGIIEARAAEKIAA.

It belongs to the GroES chaperonin family. Heptamer of 7 subunits arranged in a ring. Interacts with the chaperonin GroEL.

The protein resides in the cytoplasm. Its function is as follows. Together with the chaperonin GroEL, plays an essential role in assisting protein folding. The GroEL-GroES system forms a nano-cage that allows encapsulation of the non-native substrate proteins and provides a physical environment optimized to promote and accelerate protein folding. GroES binds to the apical surface of the GroEL ring, thereby capping the opening of the GroEL channel. The sequence is that of Co-chaperonin GroES 5 from Rhizobium meliloti (strain 1021) (Ensifer meliloti).